We begin with the raw amino-acid sequence, 113 residues long: Death-associated protein-like 1.S (113 aa).

Residues methionine 1–proline 53 form a disordered region.

Belongs to the DAP-DAPL1 family. In terms of assembly, associates with ribosomes; preventing translation. Interacts with eiF5a (eif5a and eif5a2); preventing translation.

Its function is as follows. Ribosome-binding protein that promotes ribosome hibernation, a process during which ribosomes are stabilized in an inactive state and preserved from proteasomal degradation. Acts via its association with eiF5a (eif5a and eif5a2) at the polypeptide exit tunnel of the ribosome, preventing mRNA translation. Plays a key role in ribosome hibernation in the mature egg by preventing mRNA translation, leading to ribosome inactivation. Ribosomes, which are produced in large quantities during oogenesis, are stored and translationally repressed in the egg and early embryo. This Xenopus laevis (African clawed frog) protein is Death-associated protein-like 1.S (dapl1.S).